The following is a 204-amino-acid chain: 3-isopropylmalate dehydratase small subunit (204 aa).

The protein belongs to the LeuD family. LeuD type 1 subfamily. As to quaternary structure, heterodimer of LeuC and LeuD.

The enzyme catalyses (2R,3S)-3-isopropylmalate = (2S)-2-isopropylmalate. It participates in amino-acid biosynthesis; L-leucine biosynthesis; L-leucine from 3-methyl-2-oxobutanoate: step 2/4. In terms of biological role, catalyzes the isomerization between 2-isopropylmalate and 3-isopropylmalate, via the formation of 2-isopropylmaleate. The polypeptide is 3-isopropylmalate dehydratase small subunit (Ruthia magnifica subsp. Calyptogena magnifica).